We begin with the raw amino-acid sequence, 400 residues long: Argininosuccinate synthase (400 aa).

Residue 8–16 (AYSGGLDTS) coordinates ATP. Y85 is a binding site for L-citrulline. Residue G115 coordinates ATP. The L-aspartate site is built by T117, N121, and D122. L-citrulline is bound at residue N121. Residues R125, S173, E258, and Y270 each contribute to the L-citrulline site.

This sequence belongs to the argininosuccinate synthase family. Type 1 subfamily. As to quaternary structure, homotetramer.

Its subcellular location is the cytoplasm. The catalysed reaction is L-citrulline + L-aspartate + ATP = 2-(N(omega)-L-arginino)succinate + AMP + diphosphate + H(+). Its pathway is amino-acid biosynthesis; L-arginine biosynthesis; L-arginine from L-ornithine and carbamoyl phosphate: step 2/3. This chain is Argininosuccinate synthase, found in Staphylococcus haemolyticus (strain JCSC1435).